We begin with the raw amino-acid sequence, 346 residues long: MSFRTIEWRDDKVIMIDQTRLPGEEVYCEYGDYKSVAEAIRGMIIRGAPAIGVAAAMGVALGAREIIADTHESFLRQLDNVCDVLARTRPTAVNLFWAIERMKRVAADNCGGSLDEVREVLKAEAIRIEEEDLALCKAIGRHGAGLIPEGATVLTHCNAGGLATAGYGTALGVIRAAHEAGKNIQVFADETRPWLQGARLTAWELMKDGIPVTLISDNMAGFFMKRGEITCCVVGADRIAANGDTANKIGTYSVAVLAKENNIPFYVAAPTSTLDLSLENGDQIPIEERHAREVTHLQGLPVAPEGIAVRNPAFDVTPARYIAGIITEKGVITGDYTAKLKALVKP.

Residues 46–48 (RGA), Arg89, and Gln196 each bind substrate. Asp237 (proton donor) is an active-site residue. A substrate-binding site is contributed by 247–248 (NK).

It belongs to the eIF-2B alpha/beta/delta subunits family. MtnA subfamily.

It carries out the reaction 5-(methylsulfanyl)-alpha-D-ribose 1-phosphate = 5-(methylsulfanyl)-D-ribulose 1-phosphate. The protein operates within amino-acid biosynthesis; L-methionine biosynthesis via salvage pathway; L-methionine from S-methyl-5-thio-alpha-D-ribose 1-phosphate: step 1/6. Its function is as follows. Catalyzes the interconversion of methylthioribose-1-phosphate (MTR-1-P) into methylthioribulose-1-phosphate (MTRu-1-P). This is Methylthioribose-1-phosphate isomerase from Geobacter metallireducens (strain ATCC 53774 / DSM 7210 / GS-15).